The sequence spans 458 residues: tRNA modification GTPase MnmE (458 aa).

Residues R22, E84, and R123 each coordinate (6S)-5-formyl-5,6,7,8-tetrahydrofolate. In terms of domain architecture, TrmE-type G spans 220–379; the sequence is GIATAIIGRP…LEKAIADLFF (160 aa). N230 contributes to the K(+) binding site. GTP contacts are provided by residues 230–235, 249–255, and 274–277; these read NVGKSS, TDIAGTT, and DTAG. Position 234 (S234) interacts with Mg(2+). K(+) contacts are provided by T249, I251, and T254. Residue T255 coordinates Mg(2+). A (6S)-5-formyl-5,6,7,8-tetrahydrofolate-binding site is contributed by K458.

The protein belongs to the TRAFAC class TrmE-Era-EngA-EngB-Septin-like GTPase superfamily. TrmE GTPase family. As to quaternary structure, homodimer. Heterotetramer of two MnmE and two MnmG subunits. The cofactor is K(+).

The protein resides in the cytoplasm. In terms of biological role, exhibits a very high intrinsic GTPase hydrolysis rate. Involved in the addition of a carboxymethylaminomethyl (cmnm) group at the wobble position (U34) of certain tRNAs, forming tRNA-cmnm(5)s(2)U34. This Bacillus thuringiensis (strain Al Hakam) protein is tRNA modification GTPase MnmE.